The chain runs to 220 residues: 14-3-3-like protein (220 aa).

This sequence belongs to the 14-3-3 family.

The protein is 14-3-3-like protein of Spinacia oleracea (Spinach).